A 331-amino-acid chain; its full sequence is Phosphoenolpyruvate transferase (331 aa).

Asp63 provides a ligand contact to 7,8-didemethyl-8-hydroxy-5-deazariboflavin.

The protein belongs to the CofD family. Homodimer. Mg(2+) serves as cofactor.

It carries out the reaction enolpyruvoyl-2-diphospho-5'-guanosine + 7,8-didemethyl-8-hydroxy-5-deazariboflavin = dehydro coenzyme F420-0 + GMP + H(+). It functions in the pathway cofactor biosynthesis; coenzyme F420 biosynthesis. Catalyzes the transfer of the phosphoenolpyruvate moiety from enoylpyruvoyl-2-diphospho-5'-guanosine (EPPG) to 7,8-didemethyl-8-hydroxy-5-deazariboflavin (FO) with the formation of dehydro coenzyme F420-0 and GMP. The chain is Phosphoenolpyruvate transferase from Mycobacterium sp. (strain KMS).